Consider the following 541-residue polypeptide: Phosphoenolpyruvate carboxykinase (ATP) (541 aa).

Positions 64, 206, and 212 each coordinate substrate. ATP contacts are provided by residues lysine 212, histidine 231, and 247–255 (GLSGTGKTT). Residues lysine 212 and histidine 231 each coordinate Mn(2+). Aspartate 268 serves as a coordination point for Mn(2+). The ATP site is built by glutamate 296, arginine 332, and threonine 454. Position 332 (arginine 332) interacts with substrate.

This sequence belongs to the phosphoenolpyruvate carboxykinase (ATP) family. In terms of assembly, monomer. Mn(2+) is required as a cofactor.

It is found in the cytoplasm. It catalyses the reaction oxaloacetate + ATP = phosphoenolpyruvate + ADP + CO2. It participates in carbohydrate biosynthesis; gluconeogenesis. Its function is as follows. Involved in the gluconeogenesis. Catalyzes the conversion of oxaloacetate (OAA) to phosphoenolpyruvate (PEP) through direct phosphoryl transfer between the nucleoside triphosphate and OAA. The chain is Phosphoenolpyruvate carboxykinase (ATP) from Wigglesworthia glossinidia brevipalpis.